We begin with the raw amino-acid sequence, 203 residues long: MSQLTLTLLMIVAAYLAGSVSSAVLVCRMRGLPDPRSQGSGNPGATNVLRIGGASSAAMVLFFDMLKGALPTYLAYLMGIDAISLGLIAIAACLGHIYPIFFGFKGGKGVATAFGAMAPIGDDLAICLMASWVVLVLISRYSSLAAIITALLAPLYTWWLDDRFTIPVAMLSTLIIIRHKENIQRLLKGEESKVSRKKRPKTP.

4 consecutive transmembrane segments (helical) span residues 6 to 26 (LTLL…AVLV), 82 to 102 (AISL…PIFF), 118 to 138 (APIG…LVLI), and 141 to 161 (YSSL…WWLD).

It belongs to the PlsY family. In terms of assembly, probably interacts with PlsX.

It localises to the cell inner membrane. The enzyme catalyses an acyl phosphate + sn-glycerol 3-phosphate = a 1-acyl-sn-glycero-3-phosphate + phosphate. It participates in lipid metabolism; phospholipid metabolism. Its function is as follows. Catalyzes the transfer of an acyl group from acyl-phosphate (acyl-PO(4)) to glycerol-3-phosphate (G3P) to form lysophosphatidic acid (LPA). This enzyme utilizes acyl-phosphate as fatty acyl donor, but not acyl-CoA or acyl-ACP. The chain is Glycerol-3-phosphate acyltransferase from Shewanella sp. (strain MR-4).